The sequence spans 567 residues: Hexose transporter HXT9 (567 aa).

Residues 1–16 (MSGVNNTSANDLSTTE) show a composition bias toward polar residues. Positions 1-45 (MSGVNNTSANDLSTTESNSNSVANAPSVKTEHNDSKNSLNLDATE) are disordered. Residues 1–56 (MSGVNNTSANDLSTTESNSNSVANAPSVKTEHNDSKNSLNLDATEPPIDLPQKPLS) lie on the Cytoplasmic side of the membrane. Positions 17–28 (SNSNSVANAPSV) are enriched in low complexity. Residues 57-77 (AYTTVAILCLMIAFGGFIFGW) traverse the membrane as a helical segment. Residues 78-112 (DTGTISGFVNLSDFIRRFGQKNDKGTYYLSKVRMG) lie on the Extracellular side of the membrane. Asn-87 is a glycosylation site (N-linked (GlcNAc...) asparagine). Residues 113 to 133 (LIVSIFNIGCAIGGIVLSKVG) traverse the membrane as a helical segment. The Cytoplasmic segment spans residues 134–139 (DIYGRR). A helical transmembrane segment spans residues 140-160 (IGLITVTAIYVVGILIQITSI). Residues 161–170 (NKWYQYFIGR) are Extracellular-facing. Residues 171 to 191 (IISGLGVGGIAVLSPMLISEV) form a helical membrane-spanning segment. The Cytoplasmic portion of the chain corresponds to 192–197 (APKQIR). Residues 198 to 218 (GTLVQLYQLMCTMGIFLGYCT) traverse the membrane as a helical segment. At 219 to 232 (NYGTKNYHNATQWR) the chain is on the extracellular side. Asn-227 is a glycosylation site (N-linked (GlcNAc...) asparagine). Residues 233–253 (VGLGLCFAWTTFMVSGMMFVP) traverse the membrane as a helical segment. Residues 254–336 (ESPRYLIEVG…IQSLQQLTGD (83 aa)) lie on the Cytoplasmic side of the membrane. The helical transmembrane segment at 337-353 (NYFFYYGTTIFKSVGLK) threads the bilayer. Over 354–359 (DSFQTS) the chain is Extracellular. A helical transmembrane segment spans residues 360–377 (IIIGVVNFFSSFIAVYTI). The Cytoplasmic portion of the chain corresponds to 378–384 (ERFGRRT). A helical membrane pass occupies residues 385–405 (CLLWGAASMLCCFAVFASVGV). Residues 406–429 (TKLWPQGSSHQDITSQGAGNCMIV) are Extracellular-facing. The helical transmembrane segment at 430-450 (FTMFFIFSFATTWAGGCYVIV) threads the bilayer. Residues 451–467 (SETFPLRVKSRGMAIAT) lie on the Cytoplasmic side of the membrane. Residues 468 to 488 (AANWMWGFLISFFTPFITGAI) form a helical membrane-spanning segment. Residue Asn-489 is a topological domain, extracellular. A helical membrane pass occupies residues 490–510 (FYYGYVFLGCLVFAYFYVFFF). Residues 511 to 567 (VPETKGLTLEEVNTMWLEGVPAWKSASWVPPERRTADYDADAIDHDDRPIYKRFFSS) are Cytoplasmic-facing.

The protein belongs to the major facilitator superfamily. Sugar transporter (TC 2.A.1.1) family.

It is found in the membrane. Functionally, probable glucose transporter. The protein is Hexose transporter HXT9 (HXT9) of Saccharomyces cerevisiae (strain ATCC 204508 / S288c) (Baker's yeast).